Here is a 512-residue protein sequence, read N- to C-terminus: Cytokinin hydroxylase (512 aa).

Residues 2-22 form a helical membrane-spanning segment; that stretch reads MVTLVLKYVLVIVMTLILRVL. C458 is a binding site for heme.

The protein belongs to the cytochrome P450 family. Heme is required as a cofactor. Specifically expressed in roots.

It is found in the membrane. It catalyses the reaction N(6)-(dimethylallyl)adenosine 5'-phosphate + NADPH + O2 + H(+) = 9-ribosyl-trans-zeatin 5'-phosphate + NADP(+) + H2O. The catalysed reaction is N(6)-(dimethylallyl)adenosine 5'-diphosphate + NADPH + O2 + H(+) = 9-ribosyl-trans-zeatin 5'-diphosphate + NADP(+) + H2O. It carries out the reaction N(6)-(dimethylallyl)adenosine 5'-triphosphate + NADPH + O2 + H(+) = 9-ribosyl-trans-zeatin 5'-triphosphate + NADP(+) + H2O. Functionally, cytokinin hydroxylase that catalyzes the biosynthesis of trans-zeatin via the isopentenyladenine riboside 5'-monophosphate (iPRMP)-dependent pathway. Can use isopentenyladenosine-5'-monophosphate, isopentenyladenosine-5'-diphosphate and isopentenyladenosine-5'-triphosphate as substrate. The protein is Cytokinin hydroxylase (CYP735A2) of Arabidopsis thaliana (Mouse-ear cress).